A 212-amino-acid chain; its full sequence is Pyridoxine/pyridoxamine 5'-phosphate oxidase (212 aa).

FMN-binding positions include 59–64 (RMVLMK), 74–75 (YS), Lys-81, and Gln-103. Lys-64 lines the substrate pocket. Substrate-binding residues include Tyr-121 and Arg-125. FMN is bound by residues 138 to 139 (QS) and Trp-183. 189–191 (RLH) contributes to the substrate binding site. Arg-193 contacts FMN.

It belongs to the pyridoxamine 5'-phosphate oxidase family. Homodimer. The cofactor is FMN.

The catalysed reaction is pyridoxamine 5'-phosphate + O2 + H2O = pyridoxal 5'-phosphate + H2O2 + NH4(+). It carries out the reaction pyridoxine 5'-phosphate + O2 = pyridoxal 5'-phosphate + H2O2. It participates in cofactor metabolism; pyridoxal 5'-phosphate salvage; pyridoxal 5'-phosphate from pyridoxamine 5'-phosphate: step 1/1. The protein operates within cofactor metabolism; pyridoxal 5'-phosphate salvage; pyridoxal 5'-phosphate from pyridoxine 5'-phosphate: step 1/1. Functionally, catalyzes the oxidation of either pyridoxine 5'-phosphate (PNP) or pyridoxamine 5'-phosphate (PMP) into pyridoxal 5'-phosphate (PLP). In Rhodopseudomonas palustris (strain TIE-1), this protein is Pyridoxine/pyridoxamine 5'-phosphate oxidase.